The sequence spans 170 residues: CDP-archaeol synthase (170 aa).

A run of 5 helical transmembrane segments spans residues 9 to 29 (AFWY…LGGG), 53 to 73 (GFFG…FLLP), 79 to 99 (LGIA…GDLI), 114 to 134 (PAVG…AYPV), and 140 to 160 (GEVL…NIFA).

The protein belongs to the CDP-archaeol synthase family. It depends on Mg(2+) as a cofactor.

It is found in the cell membrane. The enzyme catalyses 2,3-bis-O-(geranylgeranyl)-sn-glycerol 1-phosphate + CTP + H(+) = CDP-2,3-bis-O-(geranylgeranyl)-sn-glycerol + diphosphate. Its pathway is membrane lipid metabolism; glycerophospholipid metabolism. Catalyzes the formation of CDP-2,3-bis-(O-geranylgeranyl)-sn-glycerol (CDP-archaeol) from 2,3-bis-(O-geranylgeranyl)-sn-glycerol 1-phosphate (DGGGP) and CTP. This reaction is the third ether-bond-formation step in the biosynthesis of archaeal membrane lipids. The polypeptide is CDP-archaeol synthase (Pyrococcus horikoshii (strain ATCC 700860 / DSM 12428 / JCM 9974 / NBRC 100139 / OT-3)).